The primary structure comprises 320 residues: Nucleoporin Nup37 (320 aa).

WD repeat units follow at residues 67–113 (KEQR…FTSL), 118–157 (GHGD…ENVI), 160–200 (GLSS…TVIS), and 203–242 (SPKF…VPAD).

The protein resides in the nucleus. It localises to the nuclear pore complex. As part of the nuclear pore complex (NPC), has a role in its assembly and function. In terms of biological role, (Microbial infection) Required for optimal replication of E.chaffeensis. The chain is Nucleoporin Nup37 from Drosophila melanogaster (Fruit fly).